A 340-amino-acid polypeptide reads, in one-letter code: Mitochondrial distribution and morphology protein 12 (340 aa).

The SMP-LTD domain occupies 1–321; sequence MSIDLDWDGM…WPSWIKVSME (321 aa). Disordered regions lie at residues 79–107, 161–184, and 319–340; these read HYLP…TNPI, SVRE…EDRE, and SMED…EDEH. Residues 89–106 are compositionally biased toward polar residues; that stretch reads QRRSAPSTPHIHTNTTNP. Positions 321-340 are enriched in acidic residues; the sequence is EDEDSDDEEGEEEGDQEDEH.

The protein belongs to the MDM12 family. Component of the ER-mitochondria encounter structure (ERMES) or MDM complex, composed of MMM1, MDM10, MDM12 and MDM34. An MMM1 homodimer associates with one molecule of MDM12 on each side in a pairwise head-to-tail manner, and the SMP-LTD domains of MMM1 and MDM12 generate a continuous hydrophobic tunnel for phospholipid trafficking.

Its subcellular location is the mitochondrion outer membrane. The protein resides in the endoplasmic reticulum membrane. Its function is as follows. Component of the ERMES/MDM complex, which serves as a molecular tether to connect the endoplasmic reticulum (ER) and mitochondria. Components of this complex are involved in the control of mitochondrial shape and protein biogenesis, and function in nonvesicular lipid trafficking between the ER and mitochondria. MDM12 is required for the interaction of the ER-resident membrane protein MMM1 and the outer mitochondrial membrane-resident beta-barrel protein MDM10. The MDM12-MMM1 subcomplex functions in the major beta-barrel assembly pathway that is responsible for biogenesis of all mitochondrial outer membrane beta-barrel proteins, and acts in a late step after the SAM complex. The MDM10-MDM12-MMM1 subcomplex further acts in the TOM40-specific pathway after the action of the MDM12-MMM1 complex. Essential for establishing and maintaining the structure of mitochondria and maintenance of mtDNA nucleoids. The protein is Mitochondrial distribution and morphology protein 12 of Yarrowia lipolytica (strain CLIB 122 / E 150) (Yeast).